Here is a 297-residue protein sequence, read N- to C-terminus: Tryptophan 2,3-dioxygenase (297 aa).

Residues 51 to 55 (FIIQH), tyrosine 113, and arginine 117 contribute to the substrate site. Residue histidine 240 participates in heme binding. Threonine 254 provides a ligand contact to substrate.

The protein belongs to the tryptophan 2,3-dioxygenase family. In terms of assembly, homotetramer. Heme is required as a cofactor.

It carries out the reaction L-tryptophan + O2 = N-formyl-L-kynurenine. It participates in amino-acid degradation; L-tryptophan degradation via kynurenine pathway; L-kynurenine from L-tryptophan: step 1/2. Heme-dependent dioxygenase that catalyzes the oxidative cleavage of the L-tryptophan (L-Trp) pyrrole ring and converts L-tryptophan to N-formyl-L-kynurenine. Catalyzes the oxidative cleavage of the indole moiety. The chain is Tryptophan 2,3-dioxygenase from Xanthomonas oryzae pv. oryzae (strain MAFF 311018).